The primary structure comprises 158 residues: 6,7-dimethyl-8-ribityllumazine synthase (158 aa).

5-amino-6-(D-ribitylamino)uracil is bound by residues Phe-24, 58–60 (AFE), and 82–84 (AVI). 87-88 (GT) serves as a coordination point for (2S)-2-hydroxy-3-oxobutyl phosphate. His-90 acts as the Proton donor in catalysis. Residue Phe-115 coordinates 5-amino-6-(D-ribitylamino)uracil. Arg-129 provides a ligand contact to (2S)-2-hydroxy-3-oxobutyl phosphate.

Belongs to the DMRL synthase family. As to quaternary structure, forms an icosahedral capsid composed of 60 subunits, arranged as a dodecamer of pentamers.

The enzyme catalyses (2S)-2-hydroxy-3-oxobutyl phosphate + 5-amino-6-(D-ribitylamino)uracil = 6,7-dimethyl-8-(1-D-ribityl)lumazine + phosphate + 2 H2O + H(+). The protein operates within cofactor biosynthesis; riboflavin biosynthesis; riboflavin from 2-hydroxy-3-oxobutyl phosphate and 5-amino-6-(D-ribitylamino)uracil: step 1/2. In terms of biological role, catalyzes the formation of 6,7-dimethyl-8-ribityllumazine by condensation of 5-amino-6-(D-ribitylamino)uracil with 3,4-dihydroxy-2-butanone 4-phosphate. This is the penultimate step in the biosynthesis of riboflavin. This chain is 6,7-dimethyl-8-ribityllumazine synthase, found in Stutzerimonas stutzeri (strain A1501) (Pseudomonas stutzeri).